The primary structure comprises 378 residues: Fructose-1,6-bisphosphatase class 1 2 (378 aa).

4 residues coordinate Mg(2+): glutamate 98, aspartate 120, leucine 122, and aspartate 123. Substrate is bound by residues 123 to 126 (DGSS) and asparagine 227. Glutamate 299 contacts Mg(2+).

It belongs to the FBPase class 1 family. In terms of assembly, homotetramer. Mg(2+) is required as a cofactor.

It localises to the cytoplasm. The enzyme catalyses beta-D-fructose 1,6-bisphosphate + H2O = beta-D-fructose 6-phosphate + phosphate. The protein operates within carbohydrate biosynthesis; gluconeogenesis. The protein is Fructose-1,6-bisphosphatase class 1 2 of Paraburkholderia xenovorans (strain LB400).